Consider the following 433-residue polypeptide: Serine hydroxymethyltransferase (433 aa).

Residues L132 and 136–138 (GHL) contribute to the (6S)-5,6,7,8-tetrahydrofolate site. At K241 the chain carries N6-(pyridoxal phosphate)lysine.

The protein belongs to the SHMT family. Homodimer. The cofactor is pyridoxal 5'-phosphate.

It is found in the cytoplasm. The catalysed reaction is (6R)-5,10-methylene-5,6,7,8-tetrahydrofolate + glycine + H2O = (6S)-5,6,7,8-tetrahydrofolate + L-serine. It participates in one-carbon metabolism; tetrahydrofolate interconversion. Its pathway is amino-acid biosynthesis; glycine biosynthesis; glycine from L-serine: step 1/1. In terms of biological role, catalyzes the reversible interconversion of serine and glycine with tetrahydrofolate (THF) serving as the one-carbon carrier. This reaction serves as the major source of one-carbon groups required for the biosynthesis of purines, thymidylate, methionine, and other important biomolecules. Also exhibits THF-independent aldolase activity toward beta-hydroxyamino acids, producing glycine and aldehydes, via a retro-aldol mechanism. The chain is Serine hydroxymethyltransferase from Rhodopseudomonas palustris (strain BisA53).